Reading from the N-terminus, the 204-residue chain is MADPRVEELPDEEVPKANVEDAGSDSESEAGEESSIPAGAAVTIHSRNEKKARKAIGKLGLKHVPGITRVTLRRPKNILFVINQPDVYRSPSSNTWIIFGEAKIEDLNSQAQASAAQQLAAAEAAAGEHAGHDHDHDHGKGKAPETEAKKEEEEDDGEEVDETGLEAKDIELVMAQANVSRKKAVKALRENDNDIVNSIMALSI.

Residues 1-19 (MADPRVEELPDEEVPKANV) show a composition bias toward basic and acidic residues. 2 disordered regions span residues 1–47 (MADP…IHSR) and 118–167 (QLAA…GLEA). Over residues 22-32 (AGSDSESEAGE) the composition is skewed to acidic residues. The 66-residue stretch at 46–111 (SRNEKKARKA…AKIEDLNSQA (66 aa)) folds into the NAC-A/B domain. Residues 118–128 (QLAAAEAAAGE) are compositionally biased toward low complexity. Basic and acidic residues predominate over residues 129–151 (HAGHDHDHDHGKGKAPETEAKKE). Residues 152–164 (EEEDDGEEVDETG) show a composition bias toward acidic residues. The region spanning 165–204 (LEAKDIELVMAQANVSRKKAVKALRENDNDIVNSIMALSI) is the UBA domain.

Belongs to the NAC-alpha family. As to quaternary structure, part of the nascent polypeptide-associated complex (NAC), consisting of egd2 and egd1. NAC associates with ribosomes via egd1.

Its subcellular location is the cytoplasm. The protein localises to the nucleus. Functionally, component of the nascent polypeptide-associated complex (NAC), a dynamic component of the ribosomal exit tunnel, protecting the emerging polypeptides from interaction with other cytoplasmic proteins to ensure appropriate nascent protein targeting. The NAC complex also promotes mitochondrial protein import by enhancing productive ribosome interactions with the outer mitochondrial membrane and blocks the inappropriate interaction of ribosomes translating non-secretory nascent polypeptides with translocation sites in the membrane of the endoplasmic reticulum. Egd2 may also be involved in transcription regulation. The polypeptide is Nascent polypeptide-associated complex subunit alpha (egd2) (Aspergillus fumigatus (strain ATCC MYA-4609 / CBS 101355 / FGSC A1100 / Af293) (Neosartorya fumigata)).